The primary structure comprises 627 residues: Mitochondrial Rho GTPase 1 (627 aa).

One can recognise a Miro 1 domain in the interval Met-1–His-169. The Cytoplasmic segment spans residues Met-1–Arg-599. GTP contacts are provided by residues Gly-10–Ser-17, Asp-58–Arg-62, and Asn-114–Asp-117. 2 consecutive EF-hand domains span residues Leu-185–Lys-220 and Ala-305–Leu-340. Positions 198, 200, 202, 204, 209, 318, 320, 322, and 329 each coordinate Ca(2+). Positions Arg-420–Thr-584 constitute a Miro 2 domain. Residues Gly-429–Ser-436, Glu-465–Gly-469, and Leu-534–Asp-537 contribute to the GTP site. Residues Thr-600–Trp-620 traverse the membrane as a helical; Anchor for type IV membrane protein segment. The Mitochondrial intermembrane portion of the chain corresponds to Arg-621–Leu-627.

Belongs to the mitochondrial Rho GTPase family.

Its subcellular location is the mitochondrion outer membrane. In terms of biological role, mitochondrial GTPase involved in mitochondrial trafficking. Probably involved in control of anterograde transport of mitochondria and their subcellular distribution. The polypeptide is Mitochondrial Rho GTPase 1 (GEM1) (Gibberella zeae (strain ATCC MYA-4620 / CBS 123657 / FGSC 9075 / NRRL 31084 / PH-1) (Wheat head blight fungus)).